The chain runs to 1769 residues: Gamma-tubulin complex component 6 (1769 aa).

Disordered stretches follow at residues 809–842, 859–881, and 1284–1360; these read EAQQ…HSCD, STPS…PFST, and TVCS…AEAR. Residues 820 to 831 show a composition bias toward polar residues; the sequence is FPSTGSQVTSTG. Positions 1314–1326 are enriched in basic and acidic residues; sequence PEEKGPGKSRDAE. The span at 1332–1343 shows a compositional bias: polar residues; it reads LPSSSQEDTAVP.

Belongs to the TUBGCP family. In terms of assembly, component of the gamma-tubulin ring complex (gTuRC) consisting of TUBGCP2, TUBGCP3, TUBGCP4, TUBGCP5 and TUBGCP6 and gamma-tubulin TUBG1 or TUBG2. TUBGCP2, TUBGCP3, TUBGCP4, TUBGCP5 and TUBGCP6 assemble in a 5:5:2:1:1 stoichiometry; each is associated with a gamma-tubulin, thereby arranging 14 gamma-tubulins in a helical manner. Gamma-tubulin at the first position is blocked by TUBGCP3 at the last position, allowing 13 protafilaments to grow into a microtubule. The gTuRC (via TUBGCP3 and TUBGCP6) interacts with ACTB and MZT1; the interactions form a luminal bridge that stabilizes the initial structure during complex assembly. The gTuRC (via TUBGCP2) interacts with MZT2A/MZT2B and CDK5RAP2 (via CM1 motif); the interactions play a role in gTuRC activation.

It is found in the cytoplasm. The protein resides in the cytoskeleton. The protein localises to the microtubule organizing center. It localises to the centrosome. In terms of biological role, component of the gamma-tubulin ring complex (gTuRC) which mediates microtubule nucleation. The gTuRC regulates the minus-end nucleation of alpha-beta tubulin heterodimers that grow into microtubule protafilaments, a critical step in centrosome duplication and spindle formation. The chain is Gamma-tubulin complex component 6 (Tubgcp6) from Mus musculus (Mouse).